Consider the following 336-residue polypeptide: UPF0065 protein in tcbD-tcbE intergenic region (336 aa).

Residues 1-32 (MHSSKCPDLANIGRRRVLAGIALAMTTSSTRA) form the signal peptide.

Belongs to the UPF0065 (bug) family.

The protein resides in the periplasm. The chain is UPF0065 protein in tcbD-tcbE intergenic region from Pseudomonas sp. (strain P51).